The sequence spans 426 residues: D-tagatose-1,6-bisphosphate aldolase subunit KbaZ (426 aa).

The protein belongs to the GatZ/KbaZ family. KbaZ subfamily. Forms a complex with KbaY.

The protein operates within carbohydrate metabolism; D-tagatose 6-phosphate degradation; D-glyceraldehyde 3-phosphate and glycerone phosphate from D-tagatose 6-phosphate: step 2/2. Its function is as follows. Component of the tagatose-1,6-bisphosphate aldolase KbaYZ that is required for full activity and stability of the Y subunit. Could have a chaperone-like function for the proper and stable folding of KbaY. When expressed alone, KbaZ does not show any aldolase activity. This chain is D-tagatose-1,6-bisphosphate aldolase subunit KbaZ, found in Escherichia coli O1:K1 / APEC.